The following is a 347-amino-acid chain: Heat-inducible transcription repressor HrcA (347 aa).

Belongs to the HrcA family.

Its function is as follows. Negative regulator of class I heat shock genes (grpE-dnaK-dnaJ and groELS operons). Prevents heat-shock induction of these operons. This Enterococcus faecalis (strain ATCC 700802 / V583) protein is Heat-inducible transcription repressor HrcA.